The chain runs to 95 residues: Ferredoxin-4 (95 aa).

Residues 2 to 95 enclose the 2Fe-2S ferredoxin-type domain; that stretch reads DKATLTFTDV…LGGAVKVRPA (94 aa). Residues Cys38, Cys43, Cys46, and Cys81 each contribute to the [2Fe-2S] cluster site.

It belongs to the 2Fe2S plant-type ferredoxin family. Requires [2Fe-2S] cluster as cofactor.

Functionally, ferredoxins are iron-sulfur proteins that transfer electrons in a wide variety of metabolic reactions. This ferredoxin is required for nitrogen fixation. In Rhodobacter capsulatus (Rhodopseudomonas capsulata), this protein is Ferredoxin-4 (fdxC).